The following is a 151-amino-acid chain: C-C motif chemokine 25 (151 aa).

An N-terminal signal peptide occupies residues 1 to 22 (MNLWLLVCLVASLMGAWSTVHT). Disulfide bonds link C29-C57 and C30-C73. The disordered stretch occupies residues 94-151 (THSKQHLGSRRNLQDSHLGGQRSNTGMSRLAHSKSKSSRSTRSNKKKTSFLNMANPGP). The span at 124 to 141 (AHSKSKSSRSTRSNKKKT) shows a compositional bias: basic residues.

Belongs to the intercrine beta (chemokine CC) family.

It localises to the secreted. Potentially involved in T-cell development. Recombinant protein shows chemotactic activity on thymocytes, macrophages, THP-1 cells, and dendritics cells but is inactive on peripheral blood lymphocytes and neutrophils. Binds to CCR9. Binds to atypical chemokine receptor ACKR4 and mediates the recruitment of beta-arrestin (ARRB1/2) to ACKR4. The sequence is that of C-C motif chemokine 25 (CCL25) from Canis lupus familiaris (Dog).